Here is a 642-residue protein sequence, read N- to C-terminus: Arginine--tRNA ligase (642 aa).

Residues 133-143 carry the 'HIGH' region motif; that stretch reads VNPTKPLHMGH.

Belongs to the class-I aminoacyl-tRNA synthetase family.

The protein resides in the cytoplasm. The catalysed reaction is tRNA(Arg) + L-arginine + ATP = L-arginyl-tRNA(Arg) + AMP + diphosphate. In Thermococcus kodakarensis (strain ATCC BAA-918 / JCM 12380 / KOD1) (Pyrococcus kodakaraensis (strain KOD1)), this protein is Arginine--tRNA ligase.